A 1152-amino-acid polypeptide reads, in one-letter code: Receptor-type guanylate cyclase gcy-8 (1152 aa).

The first 21 residues, 1-21, serve as a signal peptide directing secretion; that stretch reads MRTKKAFLLLTFNVLIYLAAC. Residues 22–506 lie on the Extracellular side of the membrane; it reads QETERILANN…GYRNERCDYT (485 aa). 4 N-linked (GlcNAc...) asparagine glycosylation sites follow: Asn31, Asn55, Asn385, and Asn465. A helical transmembrane segment spans residues 507-527; the sequence is LIIIGAALILLFIVAAVSAFF. Residues 528–1152 are Cytoplasmic-facing; that stretch reads AQKILEKRAL…NLKNPTGLQR (625 aa). The 291-residue stretch at 567-857 folds into the Protein kinase domain; sequence RTKMSNMNYG…RIKLNVETYL (291 aa). ATP contacts are provided by residues 573 to 581 and Lys593; that span reads MNYGSRNHA. Residues 861 to 899 adopt a coiled-coil conformation; that stretch reads GSLVDQMTRMMEQYANNLEKLVAERTGMLEEANQRADRL. A Guanylate cyclase domain is found at 927 to 1057; that stretch reads TVLFSDIVGF…DTVNMASRME (131 aa). Mg(2+) contacts are provided by Asp932, Ile933, and Asp976.

This sequence belongs to the adenylyl cyclase class-4/guanylyl cyclase family. As to expression, expressed bilaterally in AFD sensory neurons.

The protein resides in the cell membrane. The protein localises to the cell projection. It localises to the cilium. It catalyses the reaction GTP = 3',5'-cyclic GMP + diphosphate. With respect to regulation, inhibited by chloride with an IC(50) of 60 mM. In terms of biological role, guanylate cyclase involved in the production of the second messenger cGMP. Regulates thermotaxis responses in AFD sensory neurons. May regulate AFD neuronal activity such as calcium responses to temperature gradients. Maintains the microvilli receptive ending morphology of the AFD thermosensory neurons by regulating cGMP levels downstream of kcc-3. cGMP levels antagonize the actin cytoskeleton regulator wsp-1. In Caenorhabditis elegans, this protein is Receptor-type guanylate cyclase gcy-8.